A 374-amino-acid polypeptide reads, in one-letter code: Putative G-protein coupled receptor-like protein B0244.6 (374 aa).

Residues 1-54 lie on the Extracellular side of the membrane; it reads MTQNHYTTSIFANCSKHYEFEILLETCTNSTNPCHAVSQIQSAITIAYVDYYTS. The chain crosses the membrane as a helical span at residues 55-75; it reads VALFSIAALLDIYCLIITIPL. The Cytoplasmic segment spans residues 76-86; the sequence is YRRMKDDSKKK. A helical transmembrane segment spans residues 87–107; the sequence is YVFLITRCISGLLLVVAWLLI. The Extracellular segment spans residues 108-137; it reads QCIYLRFIAPSQDNLPYYVLALALNIGSTY. Residues 138-158 traverse the membrane as a helical segment; it reads VLLGSYVGMAGILYLGVLNPI. At 159-169 the chain is on the cytoplasmic side; sequence AFNQHLTLRIV. The chain crosses the membrane as a helical span at residues 170–190; it reads YIAVCIIFVISIFISIPLAIF. Topologically, residues 191-216 are extracellular; that stretch reads QALMTVPTSSMSCTDTACAPLITLIN. Residues 217-237 form a helical membrane-spanning segment; sequence FVLVFGSLITTTLTLTFVLIS. At 238–262 the chain is on the cytoplasmic side; the sequence is LCRHRKEFKKLDTTSNTSLNSAVRL. The chain crosses the membrane as a helical span at residues 263 to 283; sequence LKFTLFAVLLLVAAEVIPFVI. Residues 284-304 lie on the Extracellular side of the membrane; the sequence is SETKKKHSVVTGCYYFYHSGK. Residues 305–325 traverse the membrane as a helical segment; it reads VIQYAVFALTESSIWSIALII. At 326–374 the chain is on the cytoplasmic side; sequence DPLINIIFDRTVSKKATDQVKWMRKSCVGLVRKVTKRSNPENFTETSEI.

This sequence belongs to the G-protein coupled receptor 1 family. B0244 subfamily.

Its subcellular location is the cell membrane. The protein is Putative G-protein coupled receptor-like protein B0244.6 of Caenorhabditis elegans.